We begin with the raw amino-acid sequence, 465 residues long: 2-halobenzoate 1,2-dioxygenase large subunit (465 aa).

The region spanning 56–154 is the Rieske domain; it reads WVFLAHESQV…GFNVDGSHDL (99 aa). [2Fe-2S] cluster contacts are provided by Cys-98, His-100, Cys-118, and His-121. The Fe cation site is built by His-227 and His-232.

It belongs to the bacterial ring-hydroxylating dioxygenase alpha subunit family. In terms of assembly, heterohexamer of 3 large (CbdA) subunits and 3 small (CbdB) subunits. The heterohexamer is part of 2-halobenzoate dioxygenase two component enzyme system. The other component is a NADH:acceptor reductase (CdbC). The cofactor is [2Fe-2S] cluster. It depends on Fe(2+) as a cofactor.

The enzyme catalyses a 2-halobenzoate + NADH + O2 + H(+) = a halide anion + catechol + CO2 + NAD(+). The protein operates within xenobiotic degradation; benzoate degradation via CoA ligation. In terms of biological role, component of 2-halobenzoate dioxygenase multicomponent enzyme system which catalyzes the incorporation of both atoms of molecular oxygen into 2-halobenzoate to form catechol. The polypeptide is 2-halobenzoate 1,2-dioxygenase large subunit (cbdA) (Burkholderia cepacia (Pseudomonas cepacia)).